The following is a 351-amino-acid chain: Probable cobalt-factor III C(17)-methyltransferase (351 aa).

It belongs to the precorrin methyltransferase family.

It carries out the reaction Co(II)-factor III + S-adenosyl-L-methionine + H(+) = Co(II)-factor IV + S-adenosyl-L-homocysteine. Its pathway is cofactor biosynthesis; adenosylcobalamin biosynthesis; cob(II)yrinate a,c-diamide from sirohydrochlorin (anaerobic route): step 3/10. Its function is as follows. Methyltransferase that likely catalyzes the ring contraction and methylation of C-17 in cobalt-factor III to form cobalt-factor IV. May also convert cobalt-precorrin-3 to cobalt-precorrin-4. The polypeptide is Probable cobalt-factor III C(17)-methyltransferase (cbiH) (Methanothermobacter thermautotrophicus (strain ATCC 29096 / DSM 1053 / JCM 10044 / NBRC 100330 / Delta H) (Methanobacterium thermoautotrophicum)).